Consider the following 670-residue polypeptide: Solute carrier organic anion transporter family member 1A1 (670 aa).

At 1-20 (MEETEKKVATQEGRFFSKMK) the chain is on the cytoplasmic side. Residues 21–40 (VFLMSLTCAYLAKSLSGVYM) form a helical membrane-spanning segment. The Extracellular segment spans residues 41 to 59 (NSMLTQIERQFGIPTSVVG). Residues 60–80 (FITGSFEIGNLLLIVFVSYFG) traverse the membrane as a helical segment. The Cytoplasmic portion of the chain corresponds to 81–86 (RKLHRP). Residues 87 to 111 (IIIGVGCVVMGLGCFLMASPHFLMG) form a helical membrane-spanning segment. Topologically, residues 112 to 155 (RYKYETTISPTSNLSSNSFLCIENRTQTLKPTQDPTECVKEIKS) are extracellular. Residues N124 and N135 are each glycosylated (N-linked (GlcNAc...) asparagine). Residues 156 to 184 (LMWIYVLIGNTMRGIGETPIMPLGISYIE) form a helical membrane-spanning segment. At 185-203 (DFAKSENSPLYIGILEMGK) the chain is on the cytoplasmic side. A helical membrane pass occupies residues 204–224 (IVGPIIGLLLGSFFARVYVDI). Topologically, residues 225–242 (GSVNTDDLTITPTDTRWV) are extracellular. The helical transmembrane segment at 243 to 267 (GAWWIGFLVCAGVNILTSIPFFFFP) threads the bilayer. At 268–311 (KTLPKKELQDNVDVTKYEKVEKHRERAKKENLGITKDFLPFMKS) the chain is on the cytoplasmic side. Residues 312-333 (LCCNPIYMLFSLTSVLQINGFA) form a helical membrane-spanning segment. Residues 334-353 (STFTFLPKYLEQQYGKSTSE) lie on the Extracellular side of the membrane. The helical transmembrane segment at 354 to 377 (AVFLIGVYSLPPVCLGYLISGFIM) threads the bilayer. Topologically, residues 378-381 (KKFK) are cytoplasmic. The helical transmembrane segment at 382–405 (ITVKKAAYIAFGLSLSEYFIFLCN) threads the bilayer. Over 406–513 (YLLTCDNFPV…PECDNKLQYF (108 aa)) the chain is Extracellular. Positions 433 to 488 (KNVLADCNTRCSCLTDTWDPVCGDNGLAYMSACLAGCEKSVGTGTNMVFQNCSCIG) constitute a Kazal-like domain. Disulfide bonds link C439-C469, C445-C465, and C454-C486. N-linked (GlcNAc...) asparagine glycans are attached at residues N483 and N492. A helical membrane pass occupies residues 514 to 536 (LIKSVFSSFIFSLAAIPGYMVLL). Residues 537–545 (RCVKSEEKS) lie on the Cytoplasmic side of the membrane. Residues 546–571 (IGVGLHAFFIRLLAGIPAPVYFGALI) traverse the membrane as a helical segment. The Extracellular segment spans residues 572–605 (DRTCLHWGTLKCGQPGACRMYDINRFRHIYLGLP). A helical membrane pass occupies residues 606-623 (AAVRGSSFLPAVFILILM). At 624–670 (RKFHFPGDIHSPDTELAEMKLTEKESECTDVCRSPKVENDGELKTKL) the chain is on the cytoplasmic side. S634 bears the Phosphoserine mark.

It belongs to the organo anion transporter (TC 2.A.60) family. In terms of assembly, binds to PDZK1. Interaction with PDZK1 is required for expression on hepatocyte surface. Highly expressed in liver, and at lower levels in kidney. Not detected in other tissues.

The protein resides in the basolateral cell membrane. The catalysed reaction is estrone 3-sulfate(out) + hydrogencarbonate(in) = estrone 3-sulfate(in) + hydrogencarbonate(out). It catalyses the reaction taurocholate(out) + hydrogencarbonate(in) = taurocholate(in) + hydrogencarbonate(out). It carries out the reaction L-thyroxine(out) = L-thyroxine(in). The enzyme catalyses prostaglandin E2(out) = prostaglandin E2(in). The catalysed reaction is 17beta-estradiol 17-O-(beta-D-glucuronate)(out) = 17beta-estradiol 17-O-(beta-D-glucuronate)(in). It catalyses the reaction dehydroepiandrosterone 3-sulfate(out) = dehydroepiandrosterone 3-sulfate(in). Mediates the Na(+)-independent transport of organic anions such as steroid sulfate conjugates (dehydroepiandrosterone sulfate (DHEAS), 17-beta-glucuronosyl estradiol, estrone-3-sulfate), conjugated (taurocholate) and unconjugated (cholate) bile acids, prostaglandin E2 (PGE2) and L-thyroxine T4. Also capable of transporting sulfobromophthalein (BSP), ouabain and gadoxetate. Hydrogencarbonate/HCO3(-) acts as the probable counteranion that exchanges for organic anions. Shows a pH-sensitive substrate specificity which may be ascribed to the protonation state of the binding site and leads to a stimulation of substrate transport in an acidic microenvironment. This Mus musculus (Mouse) protein is Solute carrier organic anion transporter family member 1A1.